Here is a 446-residue protein sequence, read N- to C-terminus: Divalent metal cation transporter MntH (446 aa).

Transmembrane regions (helical) follow at residues 32 to 52, 59 to 79, 107 to 127, 139 to 159, 168 to 188, 205 to 225, 264 to 284, 303 to 323, 355 to 375, 381 to 401, and 420 to 440; these read LAFL…GNWI, AQFG…AMLL, AIIF…AEVI, IPLI…LFIM, AIVG…VYIS, IIAN…TIMP, SIAF…FYGV, PVLG…ALLA, LVTR…FRGN, QLLV…LIPL, and VNIC…YLII.

It belongs to the NRAMP family.

The protein localises to the cell membrane. In terms of biological role, h(+)-stimulated, divalent metal cation uptake system. The chain is Divalent metal cation transporter MntH from Staphylococcus haemolyticus (strain JCSC1435).